A 502-amino-acid polypeptide reads, in one-letter code: Glycerol kinase (502 aa).

Thr14 is an ADP binding site. 3 residues coordinate ATP: Thr14, Thr15, and Ser16. Thr14 is a sn-glycerol 3-phosphate binding site. Arg18 serves as a coordination point for ADP. Positions 84, 85, and 136 each coordinate sn-glycerol 3-phosphate. Residues Arg84, Glu85, and Tyr136 each coordinate glycerol. His232 is modified (phosphohistidine; by HPr). Sn-glycerol 3-phosphate is bound at residue Asp246. Residues Asp246 and Gln247 each contribute to the glycerol site. ADP is bound by residues Thr268 and Gly311. Positions 268, 311, 315, and 412 each coordinate ATP. Positions 412 and 416 each coordinate ADP.

This sequence belongs to the FGGY kinase family. Homotetramer and homodimer (in equilibrium). In terms of processing, the phosphoenolpyruvate-dependent sugar phosphotransferase system (PTS), including enzyme I, and histidine-containing protein (HPr) are required for the phosphorylation, which leads to the activation of the enzyme.

It catalyses the reaction glycerol + ATP = sn-glycerol 3-phosphate + ADP + H(+). The protein operates within polyol metabolism; glycerol degradation via glycerol kinase pathway; sn-glycerol 3-phosphate from glycerol: step 1/1. Its activity is regulated as follows. Activated by phosphorylation and inhibited by fructose 1,6-bisphosphate (FBP). In terms of biological role, key enzyme in the regulation of glycerol uptake and metabolism. Catalyzes the phosphorylation of glycerol to yield sn-glycerol 3-phosphate. The protein is Glycerol kinase of Streptococcus pneumoniae (strain ATCC 700669 / Spain 23F-1).